We begin with the raw amino-acid sequence, 373 residues long: Packaging protein 3 (373 aa).

The disordered stretch occupies residues 1–32; that stretch reads MHPVLRQMRPQPRATTASAAVALSGSGEQEEP. The interaction with packaging protein 1 stretch occupies residues 1–150; sequence MHPVLRQMRP…VTEERNFQKS (150 aa). Phosphoserine; by host is present on residues Ser52 and Ser334.

Belongs to the adenoviridae packaging protein 3 family. In terms of assembly, part of the genome packaging complex composed of packaging proteins 1, 2 and 3; this complex specifically binds to the packaging sequence on the left end of viral genomic DNA and performs packaging of the viral genome. Interacts with hexon-linking protein IIIa; this interaction is required to promote correct genome packaging. Post-translationally, cleaved at different sites by the viral protease during virion maturation.

Its subcellular location is the host nucleus. In terms of biological role, involved in viral genome packaging through its interaction with packaging proteins 1 and 2. After proteolytic cleavage by adenovirus protease, L1 52/55k protein is removed from the capsid during viral maturation. The chain is Packaging protein 3 from Homo sapiens (Human).